The sequence spans 241 residues: Ribonuclease PH (241 aa).

Residues R89 and 127–129 (GTR) contribute to the phosphate site.

It belongs to the RNase PH family. Homohexameric ring arranged as a trimer of dimers.

The catalysed reaction is tRNA(n+1) + phosphate = tRNA(n) + a ribonucleoside 5'-diphosphate. Its function is as follows. Phosphorolytic 3'-5' exoribonuclease that plays an important role in tRNA 3'-end maturation. Removes nucleotide residues following the 3'-CCA terminus of tRNAs; can also add nucleotides to the ends of RNA molecules by using nucleoside diphosphates as substrates, but this may not be physiologically important. Probably plays a role in initiation of 16S rRNA degradation (leading to ribosome degradation) during starvation. This Xanthomonas campestris pv. campestris (strain 8004) protein is Ribonuclease PH.